The primary structure comprises 127 residues: Aspartate 1-decarboxylase (127 aa).

The active-site Schiff-base intermediate with substrate; via pyruvic acid is the Ser-25. Ser-25 bears the Pyruvic acid (Ser) mark. Position 57 (Thr-57) interacts with substrate. The Proton donor role is filled by Tyr-58. Substrate is bound at residue 73-75 (GAA).

Belongs to the PanD family. Heterooctamer of four alpha and four beta subunits. It depends on pyruvate as a cofactor. In terms of processing, is synthesized initially as an inactive proenzyme, which is activated by self-cleavage at a specific serine bond to produce a beta-subunit with a hydroxyl group at its C-terminus and an alpha-subunit with a pyruvoyl group at its N-terminus.

The protein localises to the cytoplasm. It carries out the reaction L-aspartate + H(+) = beta-alanine + CO2. The protein operates within cofactor biosynthesis; (R)-pantothenate biosynthesis; beta-alanine from L-aspartate: step 1/1. In terms of biological role, catalyzes the pyruvoyl-dependent decarboxylation of aspartate to produce beta-alanine. The chain is Aspartate 1-decarboxylase from Staphylococcus aureus (strain bovine RF122 / ET3-1).